The primary structure comprises 239 residues: Probable transcriptional regulatory protein BBR47_14810 (239 aa).

This sequence belongs to the TACO1 family. YeeN subfamily.

The protein localises to the cytoplasm. In Brevibacillus brevis (strain 47 / JCM 6285 / NBRC 100599), this protein is Probable transcriptional regulatory protein BBR47_14810.